The chain runs to 446 residues: Histidine--tRNA ligase (446 aa).

This sequence belongs to the class-II aminoacyl-tRNA synthetase family. In terms of assembly, homodimer.

It is found in the cytoplasm. It catalyses the reaction tRNA(His) + L-histidine + ATP = L-histidyl-tRNA(His) + AMP + diphosphate + H(+). This chain is Histidine--tRNA ligase, found in Burkholderia ambifaria (strain MC40-6).